Reading from the N-terminus, the 261-residue chain is Undecaprenyl-diphosphatase (261 aa).

8 consecutive transmembrane segments (helical) span residues 1-21 (MNYI…FLPV), 41-61 (FTKL…VVLY), 69-89 (LDFY…GLLF), 95-115 (ALLE…IILL), 129-149 (ITYL…IPGV), 169-186 (AAEF…GATL), 206-226 (ILII…KTFI), and 241-261 (RIVA…LTLI).

The protein belongs to the UppP family.

The protein resides in the cell inner membrane. It carries out the reaction di-trans,octa-cis-undecaprenyl diphosphate + H2O = di-trans,octa-cis-undecaprenyl phosphate + phosphate + H(+). Its function is as follows. Catalyzes the dephosphorylation of undecaprenyl diphosphate (UPP). Confers resistance to bacitracin. This is Undecaprenyl-diphosphatase from Flavobacterium psychrophilum (strain ATCC 49511 / DSM 21280 / CIP 103535 / JIP02/86).